Here is a 709-residue protein sequence, read N- to C-terminus: Translation initiation factor IF-2 (709 aa).

2 stretches are compositionally biased toward basic and acidic residues: residues 47 to 70 (DHQY…EKPK) and 105 to 121 (KGKE…EKKL). Residues 47–157 (DHQYRPNTGK…QPAKKEKELP (111 aa)) are disordered. Over residues 125–137 (AKKKGKGPAKGKK) the composition is skewed to basic residues. Residues 138–149 (QAAPAAKQAPQP) show a composition bias toward low complexity. The tr-type G domain occupies 240–409 (ERPPVVTIMG…LLVSEMEELK (170 aa)). The interval 249-256 (GHVDHGKT) is G1. Residue 249-256 (GHVDHGKT) participates in GTP binding. Residues 274–278 (GITQH) are G2. The tract at residues 295–298 (DTPG) is G3. Residues 295-299 (DTPGH) and 349-352 (NKID) contribute to the GTP site. Positions 349 to 352 (NKID) are G4. The G5 stretch occupies residues 385–387 (SAK).

The protein belongs to the TRAFAC class translation factor GTPase superfamily. Classic translation factor GTPase family. IF-2 subfamily.

It is found in the cytoplasm. Its function is as follows. One of the essential components for the initiation of protein synthesis. Protects formylmethionyl-tRNA from spontaneous hydrolysis and promotes its binding to the 30S ribosomal subunits. Also involved in the hydrolysis of GTP during the formation of the 70S ribosomal complex. This Geobacillus kaustophilus (strain HTA426) protein is Translation initiation factor IF-2.